The primary structure comprises 65 residues: Large ribosomal subunit protein bL35 (65 aa).

This sequence belongs to the bacterial ribosomal protein bL35 family.

The sequence is that of Large ribosomal subunit protein bL35 from Proteus mirabilis (strain HI4320).